The primary structure comprises 126 residues: Aspartate 1-decarboxylase (126 aa).

S25 serves as the catalytic Schiff-base intermediate with substrate; via pyruvic acid. At S25 the chain carries Pyruvic acid (Ser). T57 lines the substrate pocket. The active-site Proton donor is Y58. 73–75 (GAA) serves as a coordination point for substrate.

This sequence belongs to the PanD family. Heterooctamer of four alpha and four beta subunits. It depends on pyruvate as a cofactor. Post-translationally, is synthesized initially as an inactive proenzyme, which is activated by self-cleavage at a specific serine bond to produce a beta-subunit with a hydroxyl group at its C-terminus and an alpha-subunit with a pyruvoyl group at its N-terminus.

Its subcellular location is the cytoplasm. It catalyses the reaction L-aspartate + H(+) = beta-alanine + CO2. The protein operates within cofactor biosynthesis; (R)-pantothenate biosynthesis; beta-alanine from L-aspartate: step 1/1. Catalyzes the pyruvoyl-dependent decarboxylation of aspartate to produce beta-alanine. The polypeptide is Aspartate 1-decarboxylase (Stutzerimonas stutzeri (strain A1501) (Pseudomonas stutzeri)).